A 214-amino-acid chain; its full sequence is Threonylcarbamoyl-AMP synthase (214 aa).

The 206-residue stretch at 9–214 (TDSVIQAAHW…GDALTGQIIR (206 aa)) folds into the YrdC-like domain.

The protein belongs to the SUA5 family. TsaC subfamily.

Its subcellular location is the cytoplasm. It catalyses the reaction L-threonine + hydrogencarbonate + ATP = L-threonylcarbamoyladenylate + diphosphate + H2O. Its function is as follows. Required for the formation of a threonylcarbamoyl group on adenosine at position 37 (t(6)A37) in tRNAs that read codons beginning with adenine. Catalyzes the conversion of L-threonine, HCO(3)(-)/CO(2) and ATP to give threonylcarbamoyl-AMP (TC-AMP) as the acyladenylate intermediate, with the release of diphosphate. This chain is Threonylcarbamoyl-AMP synthase, found in Psychrobacter arcticus (strain DSM 17307 / VKM B-2377 / 273-4).